Reading from the N-terminus, the 255-residue chain is Endonuclease 8 2 (255 aa).

The active-site Schiff-base intermediate with DNA is the proline 2. The active-site Proton donor is the glutamate 3. The Proton donor; for beta-elimination activity role is filled by lysine 51. DNA-binding residues include glutamine 67 and asparagine 164. The segment at tryptophan 221–arginine 255 adopts an FPG-type zinc-finger fold. Catalysis depends on arginine 245, which acts as the Proton donor; for delta-elimination activity.

It belongs to the FPG family. Zn(2+) is required as a cofactor.

It carries out the reaction 2'-deoxyribonucleotide-(2'-deoxyribose 5'-phosphate)-2'-deoxyribonucleotide-DNA = a 3'-end 2'-deoxyribonucleotide-(2,3-dehydro-2,3-deoxyribose 5'-phosphate)-DNA + a 5'-end 5'-phospho-2'-deoxyribonucleoside-DNA + H(+). Functionally, involved in base excision repair of DNA damaged by oxidation or by mutagenic agents. Acts as a DNA glycosylase that recognizes and removes damaged bases. Has AP (apurinic/apyrimidinic) lyase activity and introduces nicks in the DNA strand. Cleaves the DNA backbone by beta-delta elimination to generate a single-strand break at the site of the removed base with both 3'- and 5'-phosphates. This Mycobacterium bovis (strain ATCC BAA-935 / AF2122/97) protein is Endonuclease 8 2 (nei2).